We begin with the raw amino-acid sequence, 311 residues long: tRNA dimethylallyltransferase (311 aa).

Residue 12–19 coordinates ATP; sequence GPTASGKT. Substrate is bound at residue 14 to 19; it reads TASGKT. Interaction with substrate tRNA regions lie at residues 37–40 and 161–165; these read DSAM and QRIQR.

The protein belongs to the IPP transferase family. In terms of assembly, monomer. Mg(2+) serves as cofactor.

The catalysed reaction is adenosine(37) in tRNA + dimethylallyl diphosphate = N(6)-dimethylallyladenosine(37) in tRNA + diphosphate. Functionally, catalyzes the transfer of a dimethylallyl group onto the adenine at position 37 in tRNAs that read codons beginning with uridine, leading to the formation of N6-(dimethylallyl)adenosine (i(6)A). This Coxiella burnetii (strain Dugway 5J108-111) protein is tRNA dimethylallyltransferase.